We begin with the raw amino-acid sequence, 98 residues long: Putative protein adenylyltransferase MJ0128 (98 aa).

The GSX(10)DXD motif signature appears at 31–45 (GSYARNEQTEKSDID). Positions 43, 45, and 75 each coordinate Mg(2+).

This sequence belongs to the MntA antitoxin family. As to quaternary structure, probably forms a complex with cognate toxin MJ0127. Requires Mg(2+) as cofactor.

The catalysed reaction is L-tyrosyl-[protein] + ATP = O-(5'-adenylyl)-L-tyrosyl-[protein] + diphosphate. It carries out the reaction O-(5'-adenylyl)-L-tyrosyl-[protein] + ATP = O-[5'-(adenylyl-(5'-&gt;3')-adenylyl)]-L-tyrosyl-[protein] + diphosphate. In terms of biological role, probable antitoxin component of a putative type VII toxin-antitoxin (TA) system. Neutralizes cognate toxic MJ0127 by di-AMPylation. This Methanocaldococcus jannaschii (strain ATCC 43067 / DSM 2661 / JAL-1 / JCM 10045 / NBRC 100440) (Methanococcus jannaschii) protein is Putative protein adenylyltransferase MJ0128.